A 445-amino-acid polypeptide reads, in one-letter code: Tubulin beta-5 chain (445 aa).

Positions 11, 69, 138, 142, 143, 144, 204, and 226 each coordinate GTP. Glu-69 provides a ligand contact to Mg(2+). The tract at residues 420-445 (AEYQQYQDATADDEYEEGEEEEEEAA) is disordered. Over residues 429–445 (TADDEYEEGEEEEEEAA) the composition is skewed to acidic residues.

Belongs to the tubulin family. Dimer of alpha and beta chains. A typical microtubule is a hollow water-filled tube with an outer diameter of 25 nm and an inner diameter of 15 nM. Alpha-beta heterodimers associate head-to-tail to form protofilaments running lengthwise along the microtubule wall with the beta-tubulin subunit facing the microtubule plus end conferring a structural polarity. Microtubules usually have 13 protofilaments but different protofilament numbers can be found in some organisms and specialized cells. Requires Mg(2+) as cofactor.

The protein resides in the cytoplasm. It is found in the cytoskeleton. Functionally, tubulin is the major constituent of microtubules, a cylinder consisting of laterally associated linear protofilaments composed of alpha- and beta-tubulin heterodimers. Microtubules grow by the addition of GTP-tubulin dimers to the microtubule end, where a stabilizing cap forms. Below the cap, tubulin dimers are in GDP-bound state, owing to GTPase activity of alpha-tubulin. This Gossypium hirsutum (Upland cotton) protein is Tubulin beta-5 chain.